The primary structure comprises 693 residues: Glycine--tRNA ligase beta subunit (693 aa).

This sequence belongs to the class-II aminoacyl-tRNA synthetase family. As to quaternary structure, tetramer of two alpha and two beta subunits.

The protein localises to the cytoplasm. It carries out the reaction tRNA(Gly) + glycine + ATP = glycyl-tRNA(Gly) + AMP + diphosphate. This Shouchella clausii (strain KSM-K16) (Alkalihalobacillus clausii) protein is Glycine--tRNA ligase beta subunit.